The primary structure comprises 308 residues: Barttin (308 aa).

At 1-5 (MADEK) the chain is on the cytoplasmic side. A regulates channel membrane trafficking and anion conductance region spans residues 1–72 (MADEKTFRIG…VPADSDFQGM (72 aa)). The helical transmembrane segment at 6-26 (TFRIGFIVLGLFLLSLGTFLM) threads the bilayer. Topologically, residues 27 to 32 (SHDRPQ) are extracellular. Residues 33–53 (VYGTFYAMGSIMVIGGVLWSM) form a helical membrane-spanning segment. S-palmitoyl cysteine attachment occurs at residues C54 and C56. Residues 54–308 (CQCYPKITFV…ELGFEPDVQG (255 aa)) lie on the Cytoplasmic side of the membrane. A phosphoserine mark is found at S79 and S107. Disordered regions lie at residues 127–149 (PLLA…HSAQ) and 162–308 (LDEK…DVQG). Positions 162-171 (LDEKEGEKSR) are enriched in basic and acidic residues. The segment covering 172–183 (SQSSPPACSQGS) has biased composition (polar residues). A compositionally biased stretch (acidic residues) spans 274-283 (EEPEQEEEDL). S290 carries the post-translational modification Phosphoserine.

As to quaternary structure, interacts with CLCNK channels. Forms heteromers with CLCNKA in the thin ascending limb of Henle and with CLCNKB in the thick ascending limb and more distal segments. In terms of processing, palmitoylation is necessary for activation of plasma membrane-inserted CLC-K/barttin channels. Expressed along the distal nephron.

It localises to the basolateral cell membrane. Regulatory subunit of anion-selective CLCNKA:BSND and CLCNKB:BSND heteromeric channels involved in basolateral chloride conductance along the nephron to achieve urine concentration and maintain systemic acid-base homeostasis, and in the stria vascularis of the inner ear to establish the endocochlear potential necessary for normal hearing. Most likely acts as a chaperone that allosterically regulates proper sorting of CLCNKA:BSND and CLCNKB:BSND channels at the basolateral plasma membrane domain and functional switch to ion conducting state. Mediates constitutive opening of channel common gates. This is Barttin from Rattus norvegicus (Rat).